A 200-amino-acid chain; its full sequence is Recombination protein RecR (200 aa).

The segment at 57–72 adopts a C4-type zinc-finger fold; sequence CNECRTFTEEDVCHIC. The Toprim domain maps to 81 to 176; sequence GLLCVVESPA…DASRIAHGVP (96 aa).

The protein belongs to the RecR family.

In terms of biological role, may play a role in DNA repair. It seems to be involved in an RecBC-independent recombinational process of DNA repair. It may act with RecF and RecO. The chain is Recombination protein RecR from Vibrio vulnificus (strain CMCP6).